The following is a 363-amino-acid chain: Type-1 angiotensin II receptor B (363 aa).

Residues 1–27 (MLSNISAGENSEVEKIVVKCSKSGMHN) are Extracellular-facing. N-linked (GlcNAc...) asparagine glycosylation is present at N4. Disulfide bonds link C20/C274 and C103/C182. Residues 28-57 (YIFITIPIIYSTIFVVGVFGNSLVVIVIYS) traverse the membrane as a helical segment. Over 58–63 (YMKMKT) the chain is Cytoplasmic. The helical transmembrane segment at 64-91 (MASVFLMNLALSDLCFVITLPLWAVYTA) threads the bilayer. Over 92–100 (MHYHWPFGD) the chain is Extracellular. Residues 101–127 (LLCKIASTAITLNLYTTVFLLTCLSID) traverse the membrane as a helical segment. The Cytoplasmic segment spans residues 128-143 (RYSAIVHPMKSRIRRT). The helical transmembrane segment at 144-167 (VMVARLTCVGIWLVAFLASLPSVI) threads the bilayer. Residues 168–192 (YRQIFIFPDTNQTVCALVYHSGHIY) are Extracellular-facing. Residue R169 coordinates angiotensin II. Residue N178 is glycosylated (N-linked (GlcNAc...) asparagine). The angiotensin II site is built by Y186 and K201. Residues 193–218 (FMVGMSLVKNIVGFFIPFVIILTSYT) traverse the membrane as a helical segment. The Cytoplasmic portion of the chain corresponds to 219 to 239 (LIGKTLKEVYRAQRARNDDIF). The helical transmembrane segment at 240-268 (KMIVAVVLLFFFCWIPHQVFTFLDVLIQM) threads the bilayer. The Extracellular segment spans residues 269–278 (DVIQNCKMYD). A helical membrane pass occupies residues 279-304 (IVDTGMPITICIAYFNSCLNPFLYGF). Over 305–363 (FGKKFRKHFLQLIKYIPPKMRTHASVNTKSSTVSQRLSDTKCASNKIALWIFDIEEHCK) the chain is Cytoplasmic. 2 S-palmitoyl cysteine lipidation sites follow: C346 and C362.

It belongs to the G-protein coupled receptor 1 family. C-terminal Ser or Thr residues may be phosphorylated. Heart membranes, follicular oocytes.

It localises to the cell membrane. Its function is as follows. Receptor for angiotensin II, a vasoconstricting peptide, which acts as a key regulator of blood pressure and sodium retention by the kidney. The activated receptor in turn couples to G-alpha proteins G(q) (GNAQ, GNA11, GNA14 or GNA15) and thus activates phospholipase C and increases the cytosolic Ca(2+) concentrations, which in turn triggers cellular responses such as stimulation of protein kinase C. In Xenopus laevis (African clawed frog), this protein is Type-1 angiotensin II receptor B (agtr1-b).